The chain runs to 471 residues: Putative multidrug resistance protein MdtD (471 aa).

At 1–11 (MTDLPDSTRWQ) the chain is on the periplasmic side. The helical transmembrane segment at 12 to 32 (LWIVAFGFFMQSLDTTIVNTA) threads the bilayer. At 33 to 48 (LPSMAQSLGESPLHMH) the chain is on the cytoplasmic side. Residues 49 to 69 (MVIVSYVLTVAVMLPASGWLA) form a helical membrane-spanning segment. Residues 70–76 (DKVGVRN) lie on the Periplasmic side of the membrane. A helical membrane pass occupies residues 77 to 97 (IFFTAIVLFTLGSLFCALSGT). Topologically, residues 98 to 101 (LNEL) are cytoplasmic. Residues 102-124 (LLARALQGVGGAMMVPVGRLTVM) traverse the membrane as a helical segment. Residues 125 to 137 (KIVPREQYMAAMT) are Periplasmic-facing. The helical transmembrane segment at 138 to 158 (FVTLPGQVGPLLGPALGGLLV) threads the bilayer. Topologically, residues 159–164 (EYASWH) are cytoplasmic. The chain crosses the membrane as a helical span at residues 165–185 (WIFLINIPVGIIGAIATLMLM). Residues 186-196 (PNYTMQTRRFD) lie on the Periplasmic side of the membrane. The chain crosses the membrane as a helical span at residues 197 to 217 (LSGFLLLAVGMAVLTLALDGS). The Cytoplasmic portion of the chain corresponds to 218–224 (KGTGLSP). Residues 225–245 (LAIAGLVAVGVVALVLYLLHA) traverse the membrane as a helical segment. At 246-262 (RNNNRALFSLKLFRTRT) the chain is on the periplasmic side. The helical transmembrane segment at 263-283 (FSLGLAGSFAGRIGSGMLPFM) threads the bilayer. At 284–285 (TP) the chain is on the cytoplasmic side. The chain crosses the membrane as a helical span at residues 286-306 (VFLQIGLGFSPFHAGLMMIPM). The Periplasmic segment spans residues 307-341 (VLGSMGMKRIVVQVVNRFGYRRVLVATTLGLSLVT). A helical transmembrane segment spans residues 342 to 362 (LLFMTTALLGWYYVLPFVLFL). The Cytoplasmic segment spans residues 363–395 (QGMVNSTRFSSMNTLTLKDLPDNLASSGNSLLS). A helical transmembrane segment spans residues 396–416 (MIMQLSMSIGVTIAGLLLGLF). Topologically, residues 417 to 430 (GSQHVSIDSGTTQT) are periplasmic. The chain crosses the membrane as a helical span at residues 431–451 (VFMYTWLSMALIIALPAFIFA). Residues 452 to 471 (RVPNDTHQNVAISRRKRSAQ) are Cytoplasmic-facing.

The protein belongs to the major facilitator superfamily. TCR/Tet family.

Its subcellular location is the cell inner membrane. This chain is Putative multidrug resistance protein MdtD, found in Escherichia coli (strain 55989 / EAEC).